The primary structure comprises 459 residues: Glutamate--tRNA ligase 1 (459 aa).

Positions 8–18 (PSPTGYIHIGN) match the 'HIGH' region motif. The 'KMSKS' region signature appears at 249–253 (GLSKR). K252 contacts ATP.

Belongs to the class-I aminoacyl-tRNA synthetase family. Glutamate--tRNA ligase type 1 subfamily. Monomer.

It is found in the cytoplasm. The enzyme catalyses tRNA(Glu) + L-glutamate + ATP = L-glutamyl-tRNA(Glu) + AMP + diphosphate. Catalyzes the attachment of glutamate to tRNA(Glu) in a two-step reaction: glutamate is first activated by ATP to form Glu-AMP and then transferred to the acceptor end of tRNA(Glu). In Bartonella quintana (strain Toulouse) (Rochalimaea quintana), this protein is Glutamate--tRNA ligase 1.